The primary structure comprises 716 residues: Beta-1,2-glucosyltransferase (716 aa).

The sophorose site is built by Y52, I99, A101, E102, N175, E176, G278, W279, E343, and R349. E176 acts as the Proton donor/acceptor in catalysis. Beta-D-glucose-binding residues include E176, G278, and W279. E343 (nucleophile) is an active-site residue. Residues R349, K358, and E361 each coordinate beta-D-glucose. Y378 contacts sophorose. S708 and Y709 together coordinate beta-D-glucose.

It belongs to the glycosyl hydrolase 35 family. As to quaternary structure, homidimer.

It is found in the cytoplasm. It catalyses the reaction a D-glucoside + [(1-&gt;2)-beta-D-glucosyl](n) = a beta-D-glucosyl-(1-&gt;2)-D-glucoside + [(1-&gt;2)-beta-D-glucosyl](n-1). Glycosyltransferase acting on beta-1,2-glucooligosaccharides. Catalyzes the transfer of a glucosyl residue from the non-reducing end of a 1,2-beta-D-glucan to a glucose residue of an acceptor molecule, forming a beta-1,2-glucosidic bond. The beta-1,2-linked glucose dimer sophorose is the preferred donor in vitro. Has a very broad specificity for the acceptor and can act on various aryl- and alkyl-glucosides. Does not show any hydrolytic activity. This is Beta-1,2-glucosyltransferase from Ignavibacterium album (strain DSM 19864 / JCM 16511 / NBRC 101810 / Mat9-16).